We begin with the raw amino-acid sequence, 122 residues long: Large ribosomal subunit protein uL14 (122 aa).

This sequence belongs to the universal ribosomal protein uL14 family. In terms of assembly, part of the 50S ribosomal subunit. Forms a cluster with proteins L3 and L19. In the 70S ribosome, L14 and L19 interact and together make contacts with the 16S rRNA in bridges B5 and B8.

In terms of biological role, binds to 23S rRNA. Forms part of two intersubunit bridges in the 70S ribosome. This chain is Large ribosomal subunit protein uL14, found in Leuconostoc mesenteroides subsp. mesenteroides (strain ATCC 8293 / DSM 20343 / BCRC 11652 / CCM 1803 / JCM 6124 / NCDO 523 / NBRC 100496 / NCIMB 8023 / NCTC 12954 / NRRL B-1118 / 37Y).